Here is a 130-residue protein sequence, read N- to C-terminus: Small ribosomal subunit protein uS9 (130 aa).

Belongs to the universal ribosomal protein uS9 family.

The chain is Small ribosomal subunit protein uS9 from Shewanella amazonensis (strain ATCC BAA-1098 / SB2B).